Consider the following 468-residue polypeptide: Adenylosuccinate synthetase (468 aa).

GTP is bound by residues 23 to 29 (GDEGKGK) and 51 to 53 (GHE). Asp24 (proton acceptor) is an active-site residue. Mg(2+) contacts are provided by Asp24 and Gly51. IMP-binding positions include 24–27 (DEGK), 49–52 (NSGH), Thr142, Arg156, Asn238, Thr253, and Arg317. His52 acts as the Proton donor in catalysis. Substrate is bound at residue 313–319 (VTTGRTR). Residues Arg319 and 345–347 (KLD) each bind GTP.

The protein belongs to the adenylosuccinate synthetase family. As to quaternary structure, homodimer. It depends on Mg(2+) as a cofactor.

The protein resides in the cytoplasm. It catalyses the reaction IMP + L-aspartate + GTP = N(6)-(1,2-dicarboxyethyl)-AMP + GDP + phosphate + 2 H(+). It participates in purine metabolism; AMP biosynthesis via de novo pathway; AMP from IMP: step 1/2. Plays an important role in the salvage pathway for purine nucleotide biosynthesis. Catalyzes the first committed step in the biosynthesis of AMP from IMP. The polypeptide is Adenylosuccinate synthetase (Theileria annulata).